A 152-amino-acid polypeptide reads, in one-letter code: Superoxide dismutase [Cu-Zn] (152 aa).

3 residues coordinate Cu cation: H45, H47, and H62. Cysteines 56 and 145 form a disulfide. Residues H62, H70, H79, and D82 each coordinate Zn(2+). H119 provides a ligand contact to Cu cation.

This sequence belongs to the Cu-Zn superoxide dismutase family. As to quaternary structure, homodimer. Cu cation serves as cofactor. It depends on Zn(2+) as a cofactor.

It localises to the cytoplasm. It catalyses the reaction 2 superoxide + 2 H(+) = H2O2 + O2. Functionally, destroys radicals which are normally produced within the cells and which are toxic to biological systems. The chain is Superoxide dismutase [Cu-Zn] (SODCC) from Nicotiana plumbaginifolia (Leadwort-leaved tobacco).